The chain runs to 223 residues: UPF0441 protein YgiB (223 aa).

The disordered stretch occupies residues 201–223; that stretch reads ESVAKQSTMQRSAAGTSTRSMGG. Positions 204-223 are enriched in polar residues; it reads AKQSTMQRSAAGTSTRSMGG.

Belongs to the UPF0441 family.

The protein is UPF0441 protein YgiB of Salmonella gallinarum (strain 287/91 / NCTC 13346).